Reading from the N-terminus, the 501-residue chain is CaM kinase-like vesicle-associated protein (501 aa).

A Protein kinase domain is found at 24 to 286 (YDLGQVIKTE…AEEAISHEWI (263 aa)). The interval 327-501 (RAPEQSSTAA…AQESQREEAS (175 aa)) is disordered. Low complexity predominate over residues 331-365 (QSSTAAAQSASATDTATPGAAGGATAAAASGATSA). The segment covering 387-428 (TPATDGSATPATDGSVTPATDGSITPATDGSVTPATDRSATP) has biased composition (polar residues). Phosphothreonine is present on Thr-435. Residues 438 to 451 (TEESTVPTTQSSAM) show a composition bias toward polar residues. Thr-459 carries the phosphothreonine modification.

The protein belongs to the protein kinase superfamily. CAMK Ser/Thr protein kinase family. Interacts with calmodulin, in the presence of calcium. Ca(2+) is required as a cofactor.

It is found in the cell membrane. Its subcellular location is the cytoplasmic vesicle membrane. Functionally, does not appear to have detectable kinase activity. The protein is CaM kinase-like vesicle-associated protein (CAMKV) of Homo sapiens (Human).